The sequence spans 209 residues: Ribosomal RNA large subunit methyltransferase E (209 aa).

Positions 63, 65, 83, 99, and 124 each coordinate S-adenosyl-L-methionine. Residue Lys-164 is the Proton acceptor of the active site.

This sequence belongs to the class I-like SAM-binding methyltransferase superfamily. RNA methyltransferase RlmE family.

It localises to the cytoplasm. The enzyme catalyses uridine(2552) in 23S rRNA + S-adenosyl-L-methionine = 2'-O-methyluridine(2552) in 23S rRNA + S-adenosyl-L-homocysteine + H(+). Functionally, specifically methylates the uridine in position 2552 of 23S rRNA at the 2'-O position of the ribose in the fully assembled 50S ribosomal subunit. The polypeptide is Ribosomal RNA large subunit methyltransferase E (Colwellia psychrerythraea (strain 34H / ATCC BAA-681) (Vibrio psychroerythus)).